Reading from the N-terminus, the 331-residue chain is Adenosine deaminase (331 aa).

2 residues coordinate Zn(2+): His-12 and His-14. Residues His-14, Asp-16, and Gly-170 each contribute to the substrate site. Zn(2+) is bound at residue His-197. Glu-200 acts as the Proton donor in catalysis. Asp-278 provides a ligand contact to Zn(2+).

Belongs to the metallo-dependent hydrolases superfamily. Adenosine and AMP deaminases family. Adenosine deaminase subfamily. Zn(2+) serves as cofactor.

The enzyme catalyses adenosine + H2O + H(+) = inosine + NH4(+). The catalysed reaction is 2'-deoxyadenosine + H2O + H(+) = 2'-deoxyinosine + NH4(+). Catalyzes the hydrolytic deamination of adenosine and 2-deoxyadenosine. This is Adenosine deaminase from Shewanella woodyi (strain ATCC 51908 / MS32).